The sequence spans 384 residues: Lipid-A-disaccharide synthase 1 (384 aa).

This sequence belongs to the LpxB family.

It catalyses the reaction a lipid X + a UDP-2-N,3-O-bis[(3R)-3-hydroxyacyl]-alpha-D-glucosamine = a lipid A disaccharide + UDP + H(+). It participates in bacterial outer membrane biogenesis; LPS lipid A biosynthesis. Its function is as follows. Condensation of UDP-2,3-diacylglucosamine and 2,3-diacylglucosamine-1-phosphate to form lipid A disaccharide, a precursor of lipid A, a phosphorylated glycolipid that anchors the lipopolysaccharide to the outer membrane of the cell. The polypeptide is Lipid-A-disaccharide synthase 1 (Legionella pneumophila (strain Lens)).